Consider the following 860-residue polypeptide: Protein argonaute-2 (860 aa).

Position 2 is a 3'-nitrotyrosine (Y2). The 120-residue stretch at 230 to 349 (PVIEFVCEVL…LPLEVCNIVA (120 aa)) folds into the PAZ domain. The interval 312-317 (YFKDRH) is interaction with guide RNA. At S388 the chain carries Phosphoserine. One can recognise a Piwi domain in the interval 518-819 (LVVVILPGKT…VAFRARYHLV (302 aa)). Positions 525–567 (GKTPVYAEVKRVGDTVLGMATQCVQMKNVQRTTPQTLSNLCLK) are interaction with guide RNA. Residues 588–591 (FQQP) form an interaction with GW182 family members region. D598 provides a ligand contact to a divalent metal cation. The interval 651–661 (LIQFYKSTRFK) is interaction with GW182 family members. D670 contributes to the a divalent metal cation binding site. P701 is subject to 4-hydroxyproline. 3 interaction with guide RNA regions span residues 710–711 (KR), 754–762 (HAGIQGTSR), and 791–813 (YVRC…VAFR). Residue H808 coordinates a divalent metal cation. S825, S829, S832, and S835 each carry phosphoserine.

The protein belongs to the argonaute family. Ago subfamily. As to quaternary structure, interacts with DICER1 through its Piwi domain and with TARBP2 during assembly of the RNA-induced silencing complex (RISC). Together, DICER1, AGO2 and TARBP2 constitute the trimeric RISC loading complex (RLC), or micro-RNA (miRNA) loading complex (miRLC). Within the RLC/miRLC, DICER1 and TARBP2 are required to process precursor miRNAs (pre-miRNAs) to mature miRNAs and then load them onto AGO2. AGO2 bound to the mature miRNA constitutes the minimal RISC and may subsequently dissociate from DICER1 and TARBP2. Note however that the term RISC has also been used to describe the trimeric RLC/miRLC. The formation of RISC complexes containing siRNAs rather than miRNAs appears to occur independently of DICER1. Interacts with AGO1. Also interacts with DDB1, DDX5, DDX6, DDX20, DHX30, DHX36, DDX47, DHX9, ELAVL, FXR1, GEMIN4, HNRNPF, IGF2BP1, ILF3, IMP8, MATR3, PABPC1, PRMT5, P4HA1, P4HB, RBM4, SART3, TNRC6A, TNRC6B, UPF1 and YBX1. Interacts with the P-body components DCP1A and XRN1. Associates with polysomes and messenger ribonucleoproteins (mNRPs). Interacts with RBM4; the interaction is modulated under stress-induced conditions, occurs under both cell proliferation and differentiation conditions and in an RNA- and phosphorylation-independent manner. Interacts with LIMD1, WTIP and AJUBA. Interacts with TRIM71. Interacts with APOBEC3G in an RNA-dependent manner. Interacts with APOBEC3A, APOBEC3C, APOBEC3F and APOBEC3H. Interacts with DICER1, TARBP2, EIF6, MOV10 and RPL7A (60S ribosome subunit); they form a large RNA-induced silencing complex (RISC). Interacts with FMR1. Interacts with ZFP36. Interacts with RC3H1; the interaction is RNA independent. Interacts with ARB2A. Found in a complex composed of AGO2, CHD7 and ARB2A. Interacts with SND1 and SYT11. Interacts with CLNK. Interacts with GARRE1. Interacts with GRB2; this interaction is important for the formation of a ternary complex containing GRB2, AGO2 and DICER1. It depends on Mg(2+) as a cofactor. Mn(2+) serves as cofactor. Hydroxylated. 4-hydroxylation appears to enhance protein stability but is not required for miRNA-binding or endonuclease activity. In terms of processing, ubiquitinated on surface-exposed lysines by a SCF-like E3 ubiquitin-protein ligase complex containing ZSWIM8 during target-directed microRNA degradation (TDMD), a process that mediates degradation of microRNAs (miRNAs). Ubiquitination by the SCF-like E3 ubiquitin-protein ligase complex containing ZSWIM8 leads to its subsequent degradation, thereby exposing miRNAs for degradation. ZSWIM8 recognizes and binds AGO2 when it is engaged with a TDMD target. Post-translationally, phosphorylation at Ser-388 by AKT3; leads to up-regulate translational repression of microRNA target and down-regulate endonucleolytic cleavage. A phosphorylation cycle of C-terminal serine cluster (Ser-825-Ser-835) regulates the release of target mRNAs. Target-binding leads to phosphorylation of these residues by CSNK1A1, which reduces the affinity of AGO2 for mRNA and enables target release. The ANKRD52-PPP6C phosphatase complex dephosphorylates the residues, which primes AGO2 for binding a new target. As to expression, ubiquitous expression in 9.5 day embryos with highest levels in forebrain, heart, limb buds, and branchial arches.

It localises to the cytoplasm. The protein localises to the P-body. Its subcellular location is the nucleus. It carries out the reaction Endonucleolytic cleavage to 5'-phosphomonoester.. Required for RNA-mediated gene silencing (RNAi) by the RNA-induced silencing complex (RISC). The 'minimal RISC' appears to include AGO2 bound to a short guide RNA such as a microRNA (miRNA) or short interfering RNA (siRNA). These guide RNAs direct RISC to complementary mRNAs that are targets for RISC-mediated gene silencing. The precise mechanism of gene silencing depends on the degree of complementarity between the miRNA or siRNA and its target. Binding of RISC to a perfectly complementary mRNA generally results in silencing due to endonucleolytic cleavage of the mRNA specifically by AGO2. Binding of RISC to a partially complementary mRNA results in silencing through inhibition of translation, and this is independent of endonuclease activity. May inhibit translation initiation by binding to the 7-methylguanosine cap, thereby preventing the recruitment of the translation initiation factor eIF4-E. May also inhibit translation initiation via interaction with EIF6, which itself binds to the 60S ribosomal subunit and prevents its association with the 40S ribosomal subunit. The inhibition of translational initiation leads to the accumulation of the affected mRNA in cytoplasmic processing bodies (P-bodies), where mRNA degradation may subsequently occur. In some cases RISC-mediated translational repression is also observed for miRNAs that perfectly match the 3' untranslated region (3'-UTR). Can also up-regulate the translation of specific mRNAs under certain growth conditions. Binds to the AU element of the 3'-UTR of the TNF (TNF-alpha) mRNA and up-regulates translation under conditions of serum starvation. Also required for transcriptional gene silencing (TGS), in which short RNAs known as antigene RNAs or agRNAs direct the transcriptional repression of complementary promoter regions. Regulates lymphoid and erythroid development and function, and this is independent of endonuclease activity. The protein is Protein argonaute-2 (Ago2) of Mus musculus (Mouse).